The primary structure comprises 455 residues: Bifunctional protein GlmU (455 aa).

The pyrophosphorylase stretch occupies residues 1 to 227 (MDSLSIVILA…SWEAAGVNNK (227 aa)). UDP-N-acetyl-alpha-D-glucosamine is bound by residues 9 to 12 (LAAG), Lys23, Gln74, 79 to 80 (GT), 101 to 103 (YGD), Gly137, Glu152, Asn167, and Asn225. Asp103 provides a ligand contact to Mg(2+). Residue Asn225 coordinates Mg(2+). The linker stretch occupies residues 228–248 (VQLAELERILQANQARALLEA). The interval 249-455 (GVTLADPARI…GWKRPQKKSG (207 aa)) is N-acetyltransferase. Residues Arg331 and Lys349 each contribute to the UDP-N-acetyl-alpha-D-glucosamine site. The active-site Proton acceptor is the His361. Residues Tyr364 and Asn375 each contribute to the UDP-N-acetyl-alpha-D-glucosamine site. Residues Ala378, 384-385 (NY), Ser403, Ala421, and Arg438 contribute to the acetyl-CoA site.

It in the N-terminal section; belongs to the N-acetylglucosamine-1-phosphate uridyltransferase family. This sequence in the C-terminal section; belongs to the transferase hexapeptide repeat family. Homotrimer. Requires Mg(2+) as cofactor.

Its subcellular location is the cytoplasm. The enzyme catalyses alpha-D-glucosamine 1-phosphate + acetyl-CoA = N-acetyl-alpha-D-glucosamine 1-phosphate + CoA + H(+). The catalysed reaction is N-acetyl-alpha-D-glucosamine 1-phosphate + UTP + H(+) = UDP-N-acetyl-alpha-D-glucosamine + diphosphate. Its pathway is nucleotide-sugar biosynthesis; UDP-N-acetyl-alpha-D-glucosamine biosynthesis; N-acetyl-alpha-D-glucosamine 1-phosphate from alpha-D-glucosamine 6-phosphate (route II): step 2/2. The protein operates within nucleotide-sugar biosynthesis; UDP-N-acetyl-alpha-D-glucosamine biosynthesis; UDP-N-acetyl-alpha-D-glucosamine from N-acetyl-alpha-D-glucosamine 1-phosphate: step 1/1. It participates in bacterial outer membrane biogenesis; LPS lipid A biosynthesis. Catalyzes the last two sequential reactions in the de novo biosynthetic pathway for UDP-N-acetylglucosamine (UDP-GlcNAc). The C-terminal domain catalyzes the transfer of acetyl group from acetyl coenzyme A to glucosamine-1-phosphate (GlcN-1-P) to produce N-acetylglucosamine-1-phosphate (GlcNAc-1-P), which is converted into UDP-GlcNAc by the transfer of uridine 5-monophosphate (from uridine 5-triphosphate), a reaction catalyzed by the N-terminal domain. The chain is Bifunctional protein GlmU from Chromobacterium violaceum (strain ATCC 12472 / DSM 30191 / JCM 1249 / CCUG 213 / NBRC 12614 / NCIMB 9131 / NCTC 9757 / MK).